Consider the following 432-residue polypeptide: Amino-acid acetyltransferase (432 aa).

An N-acetyltransferase domain is found at 286–425 (ESLREATIED…ASLYNYQRNS (140 aa)).

Belongs to the acetyltransferase family. ArgA subfamily.

It is found in the cytoplasm. The catalysed reaction is L-glutamate + acetyl-CoA = N-acetyl-L-glutamate + CoA + H(+). It functions in the pathway amino-acid biosynthesis; L-arginine biosynthesis; N(2)-acetyl-L-ornithine from L-glutamate: step 1/4. This Ectopseudomonas mendocina (strain ymp) (Pseudomonas mendocina) protein is Amino-acid acetyltransferase.